Reading from the N-terminus, the 225-residue chain is Probable GTP-binding protein EngB (225 aa).

Residues 40 to 224 (GPPEVAFAGR…RAAIVHAVTA (185 aa)) form the EngB-type G domain. GTP contacts are provided by residues 48 to 55 (GRSNVGKS), 75 to 79 (GRTQE), 102 to 105 (DMPG), 169 to 172 (TKAD), and 203 to 205 (TSS). Residues S55 and T77 each contribute to the Mg(2+) site.

Belongs to the TRAFAC class TrmE-Era-EngA-EngB-Septin-like GTPase superfamily. EngB GTPase family. Mg(2+) serves as cofactor.

Necessary for normal cell division and for the maintenance of normal septation. The polypeptide is Probable GTP-binding protein EngB (Chelativorans sp. (strain BNC1)).